We begin with the raw amino-acid sequence, 671 residues long: Kinesin-like protein KIF2C (671 aa).

A globular region spans residues 1-200 (MIDFDDVAAI…CHPLTMTDPI (200 aa)). The disordered stretch occupies residues 36–62 (KQKRRSVNSKIPAPKESLRTRSTRMST). Serine 41 bears the Phosphoserine; by AURKB mark. The short motif at 44-47 (SKIP) is the Microtubule tip localization signal element. Serine 52, serine 57, serine 61, serine 112, serine 121, serine 133, and serine 138 each carry phosphoserine. The interval 153–184 (EKKAQNSEMRMKRAQEYDSSFPNWEFARMIKE) is negative regulator of microtubule-binding. Disulfide bonds link cysteine 191/cysteine 233 and cysteine 290/cysteine 506. In terms of domain architecture, Kinesin motor spans 204 to 534 (RICVCVRKRP…LRYADRVKEL (331 aa)). 294–301 (GQTGSGKT) is a binding site for ATP. 3 positions are modified to phosphoserine: serine 465, serine 567, and serine 579. Residues 564 to 604 (GNLSKEEEELSSQMSSFNEAMTQIRELEERAVEELKEIIQQ) are a coiled coil.

Belongs to the TRAFAC class myosin-kinesin ATPase superfamily. Kinesin family. MCAK/KIF2 subfamily. In terms of assembly, interacts with CENPH. Interacts with MTUS2/TIP150; the interaction is direct. Interacts with MAPRE1; the interaction is direct, regulated by phosphorylation and is probably required for targeting to growing microtubule plus ends. Interacts with KIF18B at microtubule tips; this interaction increases the affinity of both partners for microtubule plus ends and is required for robust microtubule depolymerization. Phosphorylation by AURKA or AURKB strongly reduces KIF18B-binding. Phosphorylation by AURKB, regulates association with centromeres and kinetochores and the microtubule depolymerization activity. Post-translationally, ubiquitinated.

The protein localises to the cytoplasm. Its subcellular location is the cytoskeleton. The protein resides in the nucleus. It is found in the chromosome. It localises to the centromere. The protein localises to the kinetochore. Its function is as follows. In complex with KIF18B, constitutes the major microtubule plus-end depolymerizing activity in mitotic cells. Regulates the turnover of microtubules at the kinetochore and functions in chromosome segregation during mitosis. Plays a role in chromosome congression and is required for the lateral to end-on conversion of the chromosome-microtubule attachment. This Macaca fascicularis (Crab-eating macaque) protein is Kinesin-like protein KIF2C (KIF2C).